Reading from the N-terminus, the 144-residue chain is UPF0306 protein ESA_03544 (144 aa).

It belongs to the UPF0306 family.

In Cronobacter sakazakii (strain ATCC BAA-894) (Enterobacter sakazakii), this protein is UPF0306 protein ESA_03544.